The following is a 412-amino-acid chain: Shaggy-related protein kinase zeta (412 aa).

The span at 1-19 (MTSIPLGPPQPPSLAPQPP) shows a compositional bias: pro residues. The disordered stretch occupies residues 1–33 (MTSIPLGPPQPPSLAPQPPHLHGGDSLKRRPDI). Residues 22–33 (HGGDSLKRRPDI) show a composition bias toward basic and acidic residues. Ser26 is modified (phosphoserine). Residues 72 to 356 (YMAERVVGTG…ALEACAHPFF (285 aa)) enclose the Protein kinase domain. Residues 78-86 (VGTGSFGIV) and Lys101 contribute to the ATP site. At Ser127 the chain carries Phosphoserine. 2 positions are modified to phosphothreonine: Thr136 and Thr137. Catalysis depends on Asp197, which acts as the Proton acceptor. Ser219 bears the Phosphoserine mark. Tyr232 carries the post-translational modification Phosphotyrosine. Ser252 bears the Phosphoserine mark. Thr293 bears the Phosphothreonine mark. A Phosphoserine modification is found at Ser342. Thr346 is modified (phosphothreonine).

It belongs to the protein kinase superfamily. CMGC Ser/Thr protein kinase family. GSK-3 subfamily. Binds to KIB1. Interacts with beet curly top virus AL4/C4 and tomato golden mosaic virus AL4/AC4. Post-translationally, autophosphorylated mainly on threonine and serine residues.

It carries out the reaction L-seryl-[protein] + ATP = O-phospho-L-seryl-[protein] + ADP + H(+). The enzyme catalyses L-threonyl-[protein] + ATP = O-phospho-L-threonyl-[protein] + ADP + H(+). Functionally, may mediate extracellular signals to regulate transcription in differentiating cells. This is Shaggy-related protein kinase zeta (ASK6) from Arabidopsis thaliana (Mouse-ear cress).